A 747-amino-acid polypeptide reads, in one-letter code: Cyclic di-GMP phosphodiesterase PdeF (747 aa).

The Periplasmic portion of the chain corresponds to 1–14 (MKLNATYIKIRDKW). A helical membrane pass occupies residues 15-36 (WGLPLFLPSLILPIFAHINTFA). Topologically, residues 37 to 42 (HISSGE) are cytoplasmic. The chain crosses the membrane as a helical span at residues 43-65 (VFLFYLPLALMISMMMFFSWAAL). Over 66–79 (PGIALGIFVRKYAE) the chain is Periplasmic. A helical transmembrane segment spans residues 80–102 (LGFYETLSLTANFIIIIILCWGG). Residues 103-128 (YRVFTPRRNNVSHGDTRLISQRIFWQ) lie on the Cytoplasmic side of the membrane. Residues 129–151 (IVFPATLFLILFQFAAFVGLLAS) traverse the membrane as a helical segment. The Periplasmic portion of the chain corresponds to 152–165 (RENLVGVMPFNLGT). A helical membrane pass occupies residues 166-188 (LINYQALLVGNLIGVPLCYFIIR). At 189–215 (VVRNPFYLRSYYSQLKQQVDAKVTKKE) the chain is on the cytoplasmic side. A helical transmembrane segment spans residues 216–235 (FALWLLALGALLLLLCMPLN). Over 236–239 (EKST) the chain is Periplasmic. A helical membrane pass occupies residues 240–259 (IFSTNYTLSLLLPLMMWGAM). Over 260–265 (RYGYKL) the chain is Cytoplasmic. A helical membrane pass occupies residues 266–285 (ISLLWAVVLMISIHSYQNYI). Over 286–294 (PIYPGYTTQ) the chain is Periplasmic. A helical transmembrane segment spans residues 295–317 (LTITSSSYLVFSFIVNYMAVLAT). The Cytoplasmic portion of the chain corresponds to 318–747 (RQRAVVRRIQ…NEIEPIRESA (430 aa)). In terms of domain architecture, EAL spans 493–744 (KVAMMNRLQQ…DTLNEIEPIR (252 aa)).

It depends on Mg(2+) as a cofactor. Mn(2+) serves as cofactor.

It localises to the cell inner membrane. It carries out the reaction 3',3'-c-di-GMP + H2O = 5'-phosphoguanylyl(3'-&gt;5')guanosine + H(+). Inhibited by pGpG. Phosphodiesterase (PDE) that catalyzes the hydrolysis of cyclic-di-GMP (c-di-GMP) to 5'-pGpG. Truncated proteins consisting of the GGDEF/EAL domains (residues 319-747) or of the EAL domain alone (481-747) have c-di-GMP phosphodiesterase activity. They do not have diguanylate cyclase activity. Cyclic-di-GMP is a second messenger which controls cell surface-associated traits in bacteria. This is Cyclic di-GMP phosphodiesterase PdeF from Escherichia coli (strain K12).